A 122-amino-acid chain; its full sequence is Large ribosomal subunit protein uL14 (122 aa).

Belongs to the universal ribosomal protein uL14 family. As to quaternary structure, part of the 50S ribosomal subunit. Forms a cluster with proteins L3 and L19. In the 70S ribosome, L14 and L19 interact and together make contacts with the 16S rRNA in bridges B5 and B8.

Functionally, binds to 23S rRNA. Forms part of two intersubunit bridges in the 70S ribosome. The chain is Large ribosomal subunit protein uL14 from Lysinibacillus sphaericus (strain C3-41).